A 155-amino-acid polypeptide reads, in one-letter code: Ribosomal RNA large subunit methyltransferase H (155 aa).

Residues Leu72, Gly103, and 122 to 127 (LSPLTF) contribute to the S-adenosyl-L-methionine site.

This sequence belongs to the RNA methyltransferase RlmH family. Homodimer.

The protein resides in the cytoplasm. It catalyses the reaction pseudouridine(1915) in 23S rRNA + S-adenosyl-L-methionine = N(3)-methylpseudouridine(1915) in 23S rRNA + S-adenosyl-L-homocysteine + H(+). Its function is as follows. Specifically methylates the pseudouridine at position 1915 (m3Psi1915) in 23S rRNA. The polypeptide is Ribosomal RNA large subunit methyltransferase H (Alkalilimnicola ehrlichii (strain ATCC BAA-1101 / DSM 17681 / MLHE-1)).